The sequence spans 273 residues: Phosphate import ATP-binding protein PstB (273 aa).

One can recognise an ABC transporter domain in the interval 27-268 (VTVRNLNFYY…PSDRRTQDYI (242 aa)). Residue 59–66 (GPSGCGKS) coordinates ATP.

Belongs to the ABC transporter superfamily. Phosphate importer (TC 3.A.1.7) family. The complex is composed of two ATP-binding proteins (PstB), two transmembrane proteins (PstC and PstA) and a solute-binding protein (PstS).

The protein localises to the cell inner membrane. It catalyses the reaction phosphate(out) + ATP + H2O = ADP + 2 phosphate(in) + H(+). Functionally, part of the ABC transporter complex PstSACB involved in phosphate import. Responsible for energy coupling to the transport system. This is Phosphate import ATP-binding protein PstB from Bradyrhizobium diazoefficiens (strain JCM 10833 / BCRC 13528 / IAM 13628 / NBRC 14792 / USDA 110).